The following is an 872-amino-acid chain: Alanine--tRNA ligase (872 aa).

Zn(2+) is bound by residues His-558, His-562, Cys-660, and His-664.

The protein belongs to the class-II aminoacyl-tRNA synthetase family. Zn(2+) is required as a cofactor.

Its subcellular location is the cytoplasm. The enzyme catalyses tRNA(Ala) + L-alanine + ATP = L-alanyl-tRNA(Ala) + AMP + diphosphate. In terms of biological role, catalyzes the attachment of alanine to tRNA(Ala) in a two-step reaction: alanine is first activated by ATP to form Ala-AMP and then transferred to the acceptor end of tRNA(Ala). Also edits incorrectly charged Ser-tRNA(Ala) and Gly-tRNA(Ala) via its editing domain. The sequence is that of Alanine--tRNA ligase from Chlamydia pneumoniae (Chlamydophila pneumoniae).